An 839-amino-acid polypeptide reads, in one-letter code: Eukaryotic translation initiation factor 3 subunit C (839 aa).

The segment at 1–93 is disordered; it reads MSRFFVAGYN…DSDSEDEGRR (93 aa). Composition is skewed to acidic residues over residues 14–27 and 34–58; these read SSEE…DEEL and GEQE…SDSD. Residues 585–759 enclose the PCI domain; that stretch reads FHQHINLELL…AFIQFASTEP (175 aa). The tract at residues 783-839 is disordered; the sequence is EKTSSNGYGKKQPQQQQQQQQQQQQQQQQQKDLLQEDNSRFRYANVNTNNDEFQTTA. Residues 794-812 are compositionally biased toward low complexity; the sequence is QPQQQQQQQQQQQQQQQQQ. Residues 827-839 show a composition bias toward polar residues; that stretch reads NVNTNNDEFQTTA.

Belongs to the eIF-3 subunit C family. As to quaternary structure, component of the eukaryotic translation initiation factor 3 (eIF-3) complex.

Its subcellular location is the cytoplasm. In terms of biological role, component of the eukaryotic translation initiation factor 3 (eIF-3) complex, which is involved in protein synthesis of a specialized repertoire of mRNAs and, together with other initiation factors, stimulates binding of mRNA and methionyl-tRNAi to the 40S ribosome. The eIF-3 complex specifically targets and initiates translation of a subset of mRNAs involved in cell proliferation. In Scheffersomyces stipitis (strain ATCC 58785 / CBS 6054 / NBRC 10063 / NRRL Y-11545) (Yeast), this protein is Eukaryotic translation initiation factor 3 subunit C.